The primary structure comprises 261 residues: Thiamine thiazole synthase (261 aa).

Residues Ala33, Glu52–Arg53, Gly60, Val124, and His152–Asp154 each bind NAD(+). Fe cation contacts are provided by Asp154 and His169. An NAD(+)-binding site is contributed by Ile219. Residue Arg229 participates in glycine binding.

The protein belongs to the THI4 family. In terms of assembly, homooctamer; tetramer of dimers. Requires Fe(2+) as cofactor.

It carries out the reaction hydrogen sulfide + glycine + NAD(+) = ADP-5-ethyl-4-methylthiazole-2-carboxylate + nicotinamide + 3 H2O + H(+). It functions in the pathway cofactor biosynthesis; thiamine diphosphate biosynthesis. Its function is as follows. Involved in the biosynthesis of the thiazole moiety of thiamine. Catalyzes the conversion of NAD and glycine to adenosine diphosphate 5-(2-hydroxyethyl)-4-methylthiazole-2-carboxylate (ADT), an adenylated thiazole intermediate, using free sulfide as a source of sulfur. This chain is Thiamine thiazole synthase, found in Pyrobaculum aerophilum (strain ATCC 51768 / DSM 7523 / JCM 9630 / CIP 104966 / NBRC 100827 / IM2).